Here is a 468-residue protein sequence, read N- to C-terminus: MFNKLSTPIHIIGGGLAGCEASWQIAQSGIPVILHEMRPQKKSEAHKTGQLAELVCSNSFRSDDSSTNAVGLLHTEMRLAKSLIMKAADANKVPAGSALAVDRDGFSKTVTAALENHPLITIKREEIQEIPENWPHIIIATGPLTSPKLAKAIQTITGTEALSFFDAIAPIIYTDSINMDICWYQSRYDKIGPEGTGKDYLNCPLNKEQYEAFVQALKNAEKTEFRDFEKTPYFDGCLPIEVMAERGLETLRHGPMKPMGLTNAHNPTVKAYAVVQLRQDNKLGTLYNMVGFQTKLKYGEQVRIFRMIPGLENAEFARLGGLHRNTYLNSPIILDQTLRLKQRPGLRFAGQITGCEGYVESSAIGLLAGRFAAAEYHYNCPCLPPLTTALGALLNHITGGHIVDEKTGRKSFQPMNINFGLFPPIASASYSGKRLPSKEKKLAKKQAITARALNTCIQWLINEEKNKL.

13 to 18 contributes to the FAD binding site; that stretch reads GGGLAG.

Belongs to the MnmG family. TrmFO subfamily. The cofactor is FAD.

The protein localises to the cytoplasm. It carries out the reaction uridine(54) in tRNA + (6R)-5,10-methylene-5,6,7,8-tetrahydrofolate + NADH + H(+) = 5-methyluridine(54) in tRNA + (6S)-5,6,7,8-tetrahydrofolate + NAD(+). It catalyses the reaction uridine(54) in tRNA + (6R)-5,10-methylene-5,6,7,8-tetrahydrofolate + NADPH + H(+) = 5-methyluridine(54) in tRNA + (6S)-5,6,7,8-tetrahydrofolate + NADP(+). In terms of biological role, catalyzes the folate-dependent formation of 5-methyl-uridine at position 54 (M-5-U54) in all tRNAs. This chain is Methylenetetrahydrofolate--tRNA-(uracil-5-)-methyltransferase TrmFO, found in Bartonella henselae (strain ATCC 49882 / DSM 28221 / CCUG 30454 / Houston 1) (Rochalimaea henselae).